Reading from the N-terminus, the 221-residue chain is UPF0758 protein CGSHiEE_07200 (221 aa).

Residues 99–221 (IINDPETVKL…CYSFAENCLL (123 aa)) enclose the MPN domain. Positions 170, 172, and 183 each coordinate Zn(2+). A JAMM motif motif is present at residues 170–183 (HNHPSGVTEPSYSD).

It belongs to the UPF0758 family.

This Haemophilus influenzae (strain PittEE) protein is UPF0758 protein CGSHiEE_07200.